A 122-amino-acid chain; its full sequence is Large ribosomal subunit protein uL14 (122 aa).

It belongs to the universal ribosomal protein uL14 family. As to quaternary structure, part of the 50S ribosomal subunit. Forms a cluster with proteins L3 and L19. In the 70S ribosome, L14 and L19 interact and together make contacts with the 16S rRNA in bridges B5 and B8.

Binds to 23S rRNA. Forms part of two intersubunit bridges in the 70S ribosome. This is Large ribosomal subunit protein uL14 from Corynebacterium diphtheriae (strain ATCC 700971 / NCTC 13129 / Biotype gravis).